Reading from the N-terminus, the 422-residue chain is Zinc finger protein Gfi-1 (422 aa).

The tract at residues 1–20 (MPRSFLVKSKKAHSYHQPRS) is SNAG domain. The segment at 1–107 (MPRSFLVKSK…SPASEKSVCP (107 aa)) is disordered. S20 is modified (phosphoserine). Low complexity predominate over residues 34 to 47 (APGGADGTSSAGGA). S56 is modified (phosphoserine). Polar residues predominate over residues 57-72 (PESQLTEAPDRSSASP). A required for interaction with RELA region spans residues 140–257 (RPCAALDRGA…LLLGGGSYKC (118 aa)). C2H2-type zinc fingers lie at residues 255 to 278 (YKCIKCSKVFSTPHGLEVHVRRSH), 284 to 306 (FACEMCGKTFGHAVSLEQHKAVH), 312 to 334 (FDCKICGKSFKRSSTLSTHLLIH), 340 to 362 (YPCQYCGKRFHQKSDMKKHTFIH), 368 to 390 (HKCQVCGKAFSQSSNLITHSRKH), and 396 to 419 (FGCDLCGKGFQRKVDLRRHRETQH).

In terms of assembly, interacts with U2AF1L4. Component of RCOR-GFI-KDM1A-HDAC complexes. Interacts directly with RCOR1, KDM1A and HDAC2. Also interacts with HDAC1 and HDAC3. Interacts (via the zinc-finger domain) with ARIH2; the interaction prevents GFI1 ubiquitination and proteasomal degradation. Interacts with PIAS3; the interaction relieves the inhibitory effect of PIAS3 on STAT3-mediated transcriptional activity. Forms a complex with EHMT2 and HDAC1 to promote 'Lys-9' dimethylation of H3 (H3K9Me2) and repress expression of target genes. Interacts directly with EHMT2. Component of the GFI1-AJUBA-HDAC1 repressor complex. Interacts directly with AJUBA (via ITS LIM domains); the interaction results in the HDAC-dependent corepression of a subset of GFI1 target genes and, occurs independently of the SNAG domain. Interacts with SPI1; the interaction inhibits SPI1 transcriptional activity targeted at macrophage-specific genes, repressing macrophage differentiation of myeloid progenitor cells and promoting granulocyte commitment. Interacts with RUNX1T1; the interaction represses HDAC-mediated transcriptional activity. Interacts with RELA; the interaction occurs on liposaccharide (LPS) stimulation and controls RELA DNA binding activity and regulates endotoxin-mediated TOLL-like receptor inflammatory response. Interacts (via the C-terminal zinc fingers) with ZBTB17; the interaction results in the recruitment of GFI1 to the CDKN1A/p21 and CDKNIB promoters and repression of transcription. Post-translationally, ubiquitinated.

The protein localises to the nucleus. Transcription repressor essential for hematopoiesis. Functions in a cell-context and development-specific manner. Binds to 5'-TAAATCAC[AT]GCA-3' in the promoter region of a large number of genes. Component of several complexes, including the EHMT2-GFI1-HDAC1, AJUBA-GFI1-HDAC1 and RCOR-GFI-KDM1A-HDAC complexes, that suppress, via histone deacetylase (HDAC) recruitment, a number of genes implicated in multilineage blood cell development. Regulates neutrophil differentiation, promotes proliferation of lymphoid cells, and is required for granulocyte development. Inhibits SPI1 transcriptional activity at macrophage-specific genes, repressing macrophage differentiation of myeloid progenitor cells and promoting granulocyte commitment. Mediates, together with U2AF1L4, the alternative splicing of CD45 and controls T-cell receptor signaling. Regulates the endotoxin-mediated Toll-like receptor (TLR) inflammatory response by antagonizing RELA. Cooperates with CBFA2T2 to regulate ITGB1-dependent neurite growth. Controls cell-cycle progression by repressing CDKNIA/p21 transcription in response to TGFB1 via recruitment of GFI1 by ZBTB17 to the CDKNIA/p21 and CDKNIB promoters. Required for the maintenance of inner ear hair cells. In addition to its role in transcription, acts as a substrate adapter for PRMT1 in the DNA damage response: facilitates the recognition of TP53BP1 and MRE11 substrates by PRMT1, promoting their methylation and the DNA damage response. The protein is Zinc finger protein Gfi-1 (GFI1) of Canis lupus familiaris (Dog).